The sequence spans 160 residues: Sulfur-rich protein (160 aa).

The next 2 membrane-spanning stretches (helical) occupy residues I62–L82 and F91–M111.

The protein localises to the membrane. This Chlamydia caviae (strain ATCC VR-813 / DSM 19441 / 03DC25 / GPIC) (Chlamydophila caviae) protein is Sulfur-rich protein (srp).